A 431-amino-acid chain; its full sequence is Adenylosuccinate synthetase (431 aa).

GTP contacts are provided by residues G12–K18 and G40–T42. D13 functions as the Proton acceptor in the catalytic mechanism. Residues D13 and G40 each contribute to the Mg(2+) site. IMP is bound by residues D13–K16, N38–H41, T130, R144, Q224, T239, and R303. The Proton donor role is filled by H41. Residue S299–R305 participates in substrate binding. Residues R305, K331–D333, and S413–G415 contribute to the GTP site.

Belongs to the adenylosuccinate synthetase family. Homodimer. The cofactor is Mg(2+).

It is found in the cytoplasm. The catalysed reaction is IMP + L-aspartate + GTP = N(6)-(1,2-dicarboxyethyl)-AMP + GDP + phosphate + 2 H(+). Its pathway is purine metabolism; AMP biosynthesis via de novo pathway; AMP from IMP: step 1/2. In terms of biological role, plays an important role in the de novo pathway of purine nucleotide biosynthesis. Catalyzes the first committed step in the biosynthesis of AMP from IMP. The polypeptide is Adenylosuccinate synthetase (Cytophaga hutchinsonii (strain ATCC 33406 / DSM 1761 / CIP 103989 / NBRC 15051 / NCIMB 9469 / D465)).